The chain runs to 893 residues: Translation initiation factor IF-2 (893 aa).

Disordered regions lie at residues 51 to 203 (KEHG…AEAE) and 216 to 300 (EENE…SMQH). Basic and acidic residues-rich tracts occupy residues 102-203 (ALEE…AEAE), 216-238 (EENE…DADY), and 245-261 (HARE…EQQP). Residues 392–561 (GRAPVVTIMG…LLQSEVLELT (170 aa)) form the tr-type G domain. Residues 401-408 (GHVDHGKT) are G1. 401-408 (GHVDHGKT) is a binding site for GTP. The interval 426–430 (GITQH) is G2. Residues 447–450 (DTPG) form a G3 region. GTP-binding positions include 447-451 (DTPGH) and 501-504 (NKID). The segment at 501-504 (NKID) is G4. The tract at residues 537-539 (SAK) is G5.

It belongs to the TRAFAC class translation factor GTPase superfamily. Classic translation factor GTPase family. IF-2 subfamily.

It localises to the cytoplasm. In terms of biological role, one of the essential components for the initiation of protein synthesis. Protects formylmethionyl-tRNA from spontaneous hydrolysis and promotes its binding to the 30S ribosomal subunits. Also involved in the hydrolysis of GTP during the formation of the 70S ribosomal complex. This Aliivibrio fischeri (strain MJ11) (Vibrio fischeri) protein is Translation initiation factor IF-2.